The chain runs to 405 residues: CMP-sialic acid transporter 3 (405 aa).

Residues 1–39 (MKNGIAECPACHSKLVSPGSKTISRAYDDHKIRVSSKQR) are Cytoplasmic-facing. A helical membrane pass occupies residues 40–60 (VLNVLLVVGDCMLVGLQPVLV). The Lumenal segment spans residues 61–73 (YMSKVDGKFNFSP). Residues 74 to 94 (ISVNFLTEIAKVIFAIVMLLI) form a helical membrane-spanning segment. The Cytoplasmic portion of the chain corresponds to 95–142 (QARHQKVGEKPLLSVSTFVQAARNNVLLAVPALLYAINNYLKFTMQLY). The chain crosses the membrane as a helical span at residues 143–163 (FNPATVKMLSNLKVLVIAVLL). The Lumenal segment spans residues 164-170 (KMVMKRR). A helical membrane pass occupies residues 171–191 (FSIIQWEALALLLIGISVNQL). At 192–199 (RSLPEGAT) the chain is on the cytoplasmic side. Residues 200 to 220 (AIGIPLATGAYVCTVIFVTVP) traverse the membrane as a helical segment. Residues 221-243 (SMASVFNEYALKSQYDTSIYLQN) are Lumenal-facing. The helical transmembrane segment at 244–264 (LFLYGYGAIFNFLGILGTVIY) threads the bilayer. The Cytoplasmic segment spans residues 265–280 (KGPGSFDILQGHSRAT). Residues 281–301 (MFLILNNAAQGILSSFFFKYA) traverse the membrane as a helical segment. Residues 302-321 (DTILKKYSSTVATIFTGIAS) lie on the Lumenal side of the membrane. Residues 322-342 (AALFGHVITMNFLLGISIVFI) form a helical membrane-spanning segment. Over 343-405 (SMHQFFSPLA…SDDRTPLLPR (63 aa)) the chain is Cytoplasmic. Positions 385–405 (GANEEASHRGESDDRTPLLPR) are disordered. Residues 389–405 (EASHRGESDDRTPLLPR) are compositionally biased toward basic and acidic residues.

Belongs to the nucleotide-sugar transporter family. CMP-Sialate:CMP antiporter (TC 2.A.7.12) subfamily.

It is found in the golgi apparatus membrane. Functionally, sugar transporter involved in the transport of CMP-sialic acid from the cytoplasm into the Golgi. The polypeptide is CMP-sialic acid transporter 3 (UTR6) (Arabidopsis thaliana (Mouse-ear cress)).